The sequence spans 847 residues: Rho GTPase-activating protein 12 (847 aa).

The 63-residue stretch at 12-74 folds into the SH3 domain; sequence PGQAYIEVEY…PAQYVKEVTR (63 aa). Residues 110-241 form a disordered region; sequence LPELSSFGKP…PPNQGRPDSP (132 aa). 2 stretches are compositionally biased toward polar residues: residues 117–174 and 191–200; these read GKPS…QNRT and TSFSQEQSCD. Ser-165 carries the phosphoserine modification. A phosphoserine mark is found at Ser-201, Ser-213, and Ser-215. Positions 224-234 are enriched in polar residues; the sequence is TEQIRATTPPN. Phosphothreonine occurs at positions 230 and 231. Ser-240 carries the phosphoserine modification. Phosphotyrosine is present on Tyr-243. WW domains lie at 265–298 and 358–391; these read IQIN…PPRW and DYTN…LPKY. Positions 293–317 are disordered; sequence WKPPRWTRDASISKGDFQSPGDQEL. Disordered regions lie at residues 428-466 and 591-625; these read DTND…DQEK and PDSP…SEQK. Residues 445-461 are compositionally biased toward polar residues; sequence NESSPSSPKHQDTASSP. Residues 463 to 575 form the PH domain; it reads DQEKYGLLNV…WFKVLSSTIN (113 aa). Phosphoserine is present on Ser-593. Basic and acidic residues predominate over residues 595–610; it reads GIEKHDKEKEQKDPKK. The Rho-GAP domain occupies 657 to 845; that stretch reads SNLANLCQRE…LILLELSSIF (189 aa).

GTPase activator for the Rho-type GTPases by converting them to an inactive GDP-bound state. The polypeptide is Rho GTPase-activating protein 12 (ARHGAP12) (Macaca fascicularis (Crab-eating macaque)).